A 434-amino-acid polypeptide reads, in one-letter code: Innexin-14 (434 aa).

4 helical membrane passes run 30 to 50 (LFTVYLLGFFVLLTGAKQHFG), 106 to 126 (WVPFFFAFQVCCFLLPFWCWA), 301 to 321 (IFIGLYFWLLVLTALSVIGTV), and 365 to 385 (YLCADGILLIYFMMDTNGFLK).

This sequence belongs to the pannexin family.

The protein resides in the cell membrane. Its subcellular location is the cell junction. It localises to the gap junction. Its function is as follows. Structural component of the gap junctions. The protein is Innexin-14 (inx-14) of Caenorhabditis elegans.